The primary structure comprises 1340 residues: Early transcription factor large subunit homolog (1340 aa).

It belongs to the asfivirus G1340L family.

It localises to the virion. Its function is as follows. Putative initation factor. The chain is Early transcription factor large subunit homolog from African swine fever virus (isolate Tick/South Africa/Pretoriuskop Pr4/1996) (ASFV).